A 375-amino-acid polypeptide reads, in one-letter code: ATP-dependent kinase YFH7 (375 aa).

An ATP-binding site is contributed by 66–74; that stretch reads GPPGSGKST.

Belongs to the YFH7 family.

Functionally, ATP-dependent kinase that could be involved in endoplasmic reticulum membrane assembly. This chain is ATP-dependent kinase YFH7 (YFH7), found in Zygosaccharomyces rouxii (strain ATCC 2623 / CBS 732 / NBRC 1130 / NCYC 568 / NRRL Y-229).